The chain runs to 557 residues: Formate--tetrahydrofolate ligase (557 aa).

T67–T74 contacts ATP.

It belongs to the formate--tetrahydrofolate ligase family.

It carries out the reaction (6S)-5,6,7,8-tetrahydrofolate + formate + ATP = (6R)-10-formyltetrahydrofolate + ADP + phosphate. It participates in one-carbon metabolism; tetrahydrofolate interconversion. This chain is Formate--tetrahydrofolate ligase, found in Cereibacter sphaeroides (strain KD131 / KCTC 12085) (Rhodobacter sphaeroides).